We begin with the raw amino-acid sequence, 274 residues long: Putative ABC transporter ATP-binding protein alr3946 (274 aa).

An ABC transporter domain is found at 6–242 (LTFEQVYYTY…REILDSIELG (237 aa)). An ATP-binding site is contributed by 40 to 47 (GRNGCGKT).

The protein belongs to the ABC transporter superfamily.

Its subcellular location is the cell inner membrane. In terms of biological role, probably part of an ABC transporter complex. Responsible for energy coupling to the transport system. The chain is Putative ABC transporter ATP-binding protein alr3946 from Nostoc sp. (strain PCC 7120 / SAG 25.82 / UTEX 2576).